Reading from the N-terminus, the 985-residue chain is MPESLIAGIPVHFPFEPYPVQRAYMEKVIQCLRDGTNGVLESPTGTGKTLSLLCSSLAWIRTRQSEHQQQMVKIEKADFSGLAGGATGGELSDLGKTMGRANNWGVPKVIYASRTHSQLTQAMRELKRTAYANMRSVVLGSRDQLCIHPEVMREQGNSNKTNMCKLRVHSKTCTFQMRVESRKDHPDLRGPSIMDIEDLVKVGQRLKICPYFASRELVPQADITFMPYNYLLDPKARKANKIELGNTIVILDEAHNIEKICEESASVQIKSSDVAMAIEDVTHIMQVFASGESQDMAGDEPKDFTLDDLTLLKEMLLELEKAIDAVVVDNAAEGTTFPASLMYELLGKANFTYGNVATIVSLLDKLVQYLLVASQQMSIRKGGTFTMLSDLLTIVFANKQDVMSKVYASFKVHVQMEESKQGHGKQQGAKQQGGWLGKGTIAAASGTSKVAKIINFWCFNPGFGMEQLLNTQVRSVILTSGTLAPLKPLIAELAIPVAQHLENPHIVDQSQVYVKIIGTGPDRQQLISNYANRDNPKYISSLGQTILNVSRIVPDGLLVFFPSYPMLNKCVDAWQASGLWADISCKKPIFLEPRSKDQFTSTMEEFYQAIRDSKGAVFMAVCRGKVSEGLDFADRNGRAVIITGLPFPPLKDPKVILKRRYLEANRTRENQLLSGQEWYNLDATRAVNQAIGRVIRHRNDYGAILLCDSRFKDASQVQQLSKWIRGHLGDRPQCSPFGPIVRELRQFFKNAEANMKLPDERETDAPLETVCKTEDEPLAAIPKLKREPGSNATFKSANESAIKVEMANSIKTWTPADYASAAGRKLGGAAPSAMDFMSRLDSNVSSIDFNCCTDSKSGSSDLVKIHKRERSSPTLPESSSQVSKKRYKLVENIKVEPSSSQAKAAPEERADFLRALRSLVTQDQFRRFGKALLEYKNGTYESFQDLMAILLDVLSAPKVRYMLVGMRKYLKNEHKDEFDRRVGSL.

Residues 7–303 form the Helicase ATP-binding domain; it reads AGIPVHFPFE…QDMAGDEPKD (297 aa). 42-49 provides a ligand contact to ATP; it reads SPTGTGKT. Cysteine 146, cysteine 164, cysteine 173, and cysteine 209 together coordinate [4Fe-4S] cluster. A DEAH box motif is present at residues 252 to 255; it reads DEAH. Position 874 is a phosphothreonine (threonine 874).

This sequence belongs to the helicase family. RAD3/XPD subfamily.

It is found in the nucleus. It carries out the reaction ATP + H2O = ADP + phosphate + H(+). A probable ATP-dependent DNA helicase implicated in DNA repair and the maintenance of genomic stability. Acts as an anti-recombinase to counteract toxic recombination and limit crossover during meiosis. Regulates meiotic recombination and crossover homeostasis by physically dissociating strand invasion events and thereby promotes noncrossover repair by meiotic synthesis dependent strand annealing (SDSA) as well as disassembly of D loop recombination intermediates. The protein is Regulator of telomere elongation helicase 1 homolog of Drosophila erecta (Fruit fly).